We begin with the raw amino-acid sequence, 1011 residues long: MSQASVDMEDVKPSISLPSDDGGAMEARLTDVCKSKLALDESTMRQAMILFRESKHILLANMSAIGSGSPEEIERFWSAFVLYCVTRLSKGRTKQEKEENGITLCRILRVLKMNVVDFFKEIPQFCLKAGYILTGLYGSDWEKRLELKELQANIVHLSLLSRYYKRAYQELFLPNDASSGRHSVAPNSVGYVSDYHHFGWLLFLALRIHAFSRFKDLVTCTNGLVSILAILILHIPARFRNFHIQDSLLFAKRTAKGVDLVASLCDKYHTSEDELRRVMEKANNLIVDILKKKPCAASECKRENLAYINTDGLIYFEDLLEENSLQSSILILEDNYDDAINSKGELDERMFVNDEDSLLGSGSLSGGSIKMKRKYDAMASPAKSITSPLSPPLSPASPVNGNPVIKMVPITPVSTAMTTAKWLRNIISPLPSRPSTELLCFFSSCDRDITTDVTRRASIILGAIFPTTSFGDCCISGNLQSVNQMDSIWAEQRKVEAMKLYYRVLETMCRAESHILNGNNLTSLLSNDRFHRCMLACSAELVLATHKTVTMMFPAVLEKTGITAFDLSKVIESFVRHEETLPRELKRHLNSLEERLLESMAWERGSSMYNSLIVARPTLAAEINRLGLLAEPMPSLDAIAVHNNISTGGLPPLPFQKHEHSSDQNGGAVSPKRACSEYRSVLVERNSFTSPVKELTLTLNLKSKLPPLQSAFASPTRPNPAGGGETCAETGINIFFNKIVKLAAIRIRSLCERLQLPQQILEWVYCLIQQILSQRTALFFNRHIDQIILCSFYGVAKISQMALTFKEIIYNYRKQPQCKPQVFRSVFVHWPSTSHNGKTGQEHVDIITFYNEVFIPSVKPLLVELGPAGVAQKSKSSPEDSNNADSQIPGSPRLSPFPNLPDMSPKKVSAAHNVYVSPLRSSKMDALLSPSSKSYYACVGESTHAYQSPSKDLTAINNRLNSGRKVSGRLNFDVVSDSVVAGSLGAQNGSSAPAPACSILELPVKREQPDS.

Residues methionine 1–glycine 22 are disordered. A domain A region spans residues threonine 411–leucine 612. A pocket region spans residues threonine 411 to proline 860. Positions isoleucine 613 to glutamate 729 are spacer. A domain B region spans residues threonine 730–proline 860. Residues glutamine 872–methionine 903 form a disordered region. The segment covering lysine 873–proline 889 has biased composition (polar residues).

This sequence belongs to the retinoblastoma protein (RB) family.

The protein localises to the nucleus. Its function is as follows. Regulator of biological processes that recruits a histone deacetylase to control gene transcription. May play a role in the entry into mitosis, negatively regulating the cell proliferation. Formation of stable complexes with geminiviridae replication-associated proteins may create a cellular environment which favors viral DNA replication. The sequence is that of Retinoblastoma-related protein (Rb1) from Cocos nucifera (Coconut palm).